Reading from the N-terminus, the 606-residue chain is 1-deoxy-D-xylulose-5-phosphate synthase (606 aa).

Thiamine diphosphate contacts are provided by residues His-63 and 104 to 106; that span reads GHS. Asp-137 provides a ligand contact to Mg(2+). Thiamine diphosphate is bound by residues 138-139, Asn-166, Tyr-273, and Glu-354; that span reads GS. Residue Asn-166 coordinates Mg(2+).

Belongs to the transketolase family. DXPS subfamily. Homodimer. Mg(2+) is required as a cofactor. It depends on thiamine diphosphate as a cofactor.

It catalyses the reaction D-glyceraldehyde 3-phosphate + pyruvate + H(+) = 1-deoxy-D-xylulose 5-phosphate + CO2. The protein operates within metabolic intermediate biosynthesis; 1-deoxy-D-xylulose 5-phosphate biosynthesis; 1-deoxy-D-xylulose 5-phosphate from D-glyceraldehyde 3-phosphate and pyruvate: step 1/1. Functionally, catalyzes the acyloin condensation reaction between C atoms 2 and 3 of pyruvate and glyceraldehyde 3-phosphate to yield 1-deoxy-D-xylulose-5-phosphate (DXP). The protein is 1-deoxy-D-xylulose-5-phosphate synthase of Sulfurimonas denitrificans (strain ATCC 33889 / DSM 1251) (Thiomicrospira denitrificans (strain ATCC 33889 / DSM 1251)).